The following is a 397-amino-acid chain: MNCISDFFTYETTKSVVVKSWTIGIINRVVQLLIISYFVGWVFLHEKAYQVRDTAIESSVVTKVKGSGLYANRVMDVSDYVTPPQGTSVFVIITKMIVTENQMQGFCPESEEKYRCVSDSQCGPERLPGGGILTGRCVNYSSVLRTCEIQGWCPTEVDTVETPIMMEAENFTIFIKNSIRFPLFNFEKGNLLPNLTARDMKTCRFHPDKDPFCPILRVGDVVKFAGQDFAKLARTGGVLGIKIGWVCDLDKAWDQCIPKYSFTRLDSVSEKSSVSPGYNFRFAKYYKMENGSEYRTLLKAFGIRFDVLVYGNAGKFNIIPTIISSVAAFTSVGVGTVLCDIILLNFLKGADQYKAKKFEEVNETTLKIAALTNPVYPSDQTTAEKQSTDSGAFSIGH.

Over 1 to 20 (MNCISDFFTYETTKSVVVKS) the chain is Cytoplasmic. A helical transmembrane segment spans residues 21–43 (WTIGIINRVVQLLIISYFVGWVF). Over 44–322 (LHEKAYQVRD…AGKFNIIPTI (279 aa)) the chain is Extracellular. ATP-binding residues include Lys-63 and Lys-65. Disulfide bonds link Cys-107–Cys-153, Cys-116–Cys-137, and Cys-122–Cys-147. Glu-111 is a Mg(2+) binding site. The N-linked (GlcNAc...) asparagine glycan is linked to Asn-139. Position 158 (Asp-158) interacts with Mg(2+). Residue Asp-158 participates in Ca(2+) binding. N-linked (GlcNAc...) asparagine glycosylation is present at Asn-170. Thr-172 contributes to the ATP binding site. An N-linked (GlcNAc...) asparagine glycan is attached at Asn-194. Disulfide bonds link Cys-203/Cys-213 and Cys-247/Cys-256. Positions 275, 279, and 281 each coordinate ATP. Residue Asn-290 is glycosylated (N-linked (GlcNAc...) asparagine). Lys-299 provides a ligand contact to ATP. A helical membrane pass occupies residues 323–341 (ISSVAAFTSVGVGTVLCDI). The Cytoplasmic segment spans residues 342-397 (ILLNFLKGADQYKAKKFEEVNETTLKIAALTNPVYPSDQTTAEKQSTDSGAFSIGH). Residues 378-391 (SDQTTAEKQSTDSG) are compositionally biased toward polar residues. The interval 378-397 (SDQTTAEKQSTDSGAFSIGH) is disordered.

It belongs to the P2X receptor family. Homotrimer. Forms heterotrimer with P2RX2. Heterotrimeric P2RX2/3 has a ligand dose-response profile that is distinct from either homotrimeric P2RX2 or P2RX3.

The protein resides in the cell membrane. The catalysed reaction is Ca(2+)(in) = Ca(2+)(out). It catalyses the reaction Na(+)(in) = Na(+)(out). Has high sensitivity to ATP. Fast activation by external ATP. Exhibits rapid desensitization. Sensitives to the ATP agonist:alpha/beta-methylene-ATP. Subject to allosteric inhibition by AF-219. Mg(2+) and Ca(2+) slow deactivation of P2RX3. Extracellular ATP-activated non-selective cation channel. Plays particularly important role in sensory neurons where its activation is critical for gustatory, nociceptive responses, visceral reflexes and sensory hypersensitization. The chain is P2X purinoceptor 3 (P2RX3) from Homo sapiens (Human).